Consider the following 413-residue polypeptide: D-nopaline dehydrogenase (413 aa).

Belongs to the lysopine/nopaline/octopine/opine/vitopine dehydrogenases family. In terms of assembly, homotetramer.

The catalysed reaction is D-nopaline + NADP(+) + H2O = L-arginine + 2-oxoglutarate + NADPH + H(+). This chain is D-nopaline dehydrogenase (nos), found in Agrobacterium tumefaciens (strain T37).